The chain runs to 402 residues: Imidazolonepropionase (402 aa).

The Fe(3+) site is built by His66 and His68. Zn(2+) is bound by residues His66 and His68. The 4-imidazolone-5-propanoate site is built by Arg75, Tyr138, and His171. Tyr138 lines the N-formimidoyl-L-glutamate pocket. His236 is a Fe(3+) binding site. A Zn(2+)-binding site is contributed by His236. Residue Gln239 participates in 4-imidazolone-5-propanoate binding. Asp311 serves as a coordination point for Fe(3+). Asp311 serves as a coordination point for Zn(2+). Residues Asn313 and Gly315 each contribute to the N-formimidoyl-L-glutamate site. Thr316 lines the 4-imidazolone-5-propanoate pocket.

The protein belongs to the metallo-dependent hydrolases superfamily. HutI family. Zn(2+) serves as cofactor. Fe(3+) is required as a cofactor.

It localises to the cytoplasm. It carries out the reaction 4-imidazolone-5-propanoate + H2O = N-formimidoyl-L-glutamate. Its pathway is amino-acid degradation; L-histidine degradation into L-glutamate; N-formimidoyl-L-glutamate from L-histidine: step 3/3. Catalyzes the hydrolytic cleavage of the carbon-nitrogen bond in imidazolone-5-propanoate to yield N-formimidoyl-L-glutamate. It is the third step in the universal histidine degradation pathway. This is Imidazolonepropionase from Pseudomonas aeruginosa (strain LESB58).